The following is a 1183-amino-acid chain: DNA-directed RNA polymerase subunit beta (1183 aa).

It belongs to the RNA polymerase beta chain family. In terms of assembly, the RNAP catalytic core consists of 2 alpha, 1 beta, 1 beta' and 1 omega subunit. When a sigma factor is associated with the core the holoenzyme is formed, which can initiate transcription.

The enzyme catalyses RNA(n) + a ribonucleoside 5'-triphosphate = RNA(n+1) + diphosphate. Its function is as follows. DNA-dependent RNA polymerase catalyzes the transcription of DNA into RNA using the four ribonucleoside triphosphates as substrates. This Staphylococcus aureus (strain Mu3 / ATCC 700698) protein is DNA-directed RNA polymerase subunit beta.